The sequence spans 852 residues: Bifunctional uridylyltransferase/uridylyl-removing enzyme (852 aa).

Residues M1–I318 are uridylyltransferase. Residues D319 to F672 form a uridylyl-removing region. Residues V436–L558 form the HD domain. ACT domains lie at Q673–R757 and S785–S852.

It belongs to the GlnD family. It depends on Mg(2+) as a cofactor.

It carries out the reaction [protein-PII]-L-tyrosine + UTP = [protein-PII]-uridylyl-L-tyrosine + diphosphate. The enzyme catalyses [protein-PII]-uridylyl-L-tyrosine + H2O = [protein-PII]-L-tyrosine + UMP + H(+). Its activity is regulated as follows. Uridylyltransferase (UTase) activity is inhibited by glutamine, while glutamine activates uridylyl-removing (UR) activity. Functionally, modifies, by uridylylation and deuridylylation, the PII regulatory proteins (GlnB and homologs), in response to the nitrogen status of the cell that GlnD senses through the glutamine level. Under low glutamine levels, catalyzes the conversion of the PII proteins and UTP to PII-UMP and PPi, while under higher glutamine levels, GlnD hydrolyzes PII-UMP to PII and UMP (deuridylylation). Thus, controls uridylylation state and activity of the PII proteins, and plays an important role in the regulation of nitrogen assimilation and metabolism. This chain is Bifunctional uridylyltransferase/uridylyl-removing enzyme, found in Neisseria meningitidis serogroup B (strain ATCC BAA-335 / MC58).